A 299-amino-acid polypeptide reads, in one-letter code: MEELSGPSSDTLATVESSSNEPDKEVASPDVAATATLSSVEEPGPNPTATPPVWDRGGPLQQVACPVPDSCQTSSTTRGVGTNEDLRLPRRRPPPGKQIPCSSPGCSLSFPSVRDLAQHLRTHCPPTQSLEGKLFRCSALSCTESFPSMQELVAHGKLHYKPNRYFKCENCLLRFRTHRSLFKHLHVCIDHGQNPAPPPPPALDKEPPVPERPPESDPSSSLGLPFPLLEPFTSAPTGPFLPYLNPAPFGLSPPRLRPFLAATPGPPTSSTAIWKKSQGATSSPRRPQGGSDAPSGACR.

Composition is skewed to polar residues over residues 1 to 20 (MEEL…SSSN) and 70 to 80 (SCQTSSTTRGV). The disordered stretch occupies residues 1–102 (MEELSGPSSD…PPPGKQIPCS (102 aa)). 2 C2H2-type zinc fingers span residues 99–123 (IPCS…LRTH) and 135–159 (FRCS…GKLH). Residues 166–190 (FKCENCLLRFRTHRSLFKHLHVCID) form a C2H2-type 3; degenerate zinc finger. Disordered stretches follow at residues 193 to 228 (QNPA…PFPL) and 254 to 299 (PRLR…GACR). The segment covering 203 to 215 (LDKEPPVPERPPE) has biased composition (basic and acidic residues). Residues 217-228 (DPSSSLGLPFPL) show a composition bias toward low complexity. Positions 268–285 (TSSTAIWKKSQGATSSPR) are enriched in polar residues.

The protein belongs to the krueppel C2H2-type zinc-finger protein family.

The protein resides in the nucleus. Its function is as follows. May be involved in transcriptional regulation. The polypeptide is Zinc finger protein 414 (Znf414) (Rattus norvegicus (Rat)).